The chain runs to 440 residues: Xylose isomerase (440 aa).

Active-site residues include His-101 and Asp-104. Positions 232, 268, 271, 296, 307, 309, and 339 each coordinate Mg(2+).

This sequence belongs to the xylose isomerase family. In terms of assembly, homotetramer. The cofactor is Mg(2+).

It is found in the cytoplasm. The enzyme catalyses alpha-D-xylose = alpha-D-xylulofuranose. The protein is Xylose isomerase of Salmonella agona (strain SL483).